The following is a 105-amino-acid chain: Large ribosomal subunit protein eL36 (105 aa).

Lys-62 is subject to N6-acetyllysine.

It belongs to the eukaryotic ribosomal protein eL36 family. In terms of assembly, component of the large ribosomal subunit.

The protein localises to the cytoplasm. Its subcellular location is the cytosol. In terms of biological role, component of the large ribosomal subunit. The ribosome is a large ribonucleoprotein complex responsible for the synthesis of proteins in the cell. This chain is Large ribosomal subunit protein eL36 (Rpl36), found in Rattus norvegicus (Rat).